A 194-amino-acid chain; its full sequence is Xanthine phosphoribosyltransferase (194 aa).

Leucine 20 and asparagine 27 together coordinate xanthine. 128–132 (ANGCA) is a 5-phospho-alpha-D-ribose 1-diphosphate binding site. Lysine 156 contributes to the xanthine binding site.

This sequence belongs to the purine/pyrimidine phosphoribosyltransferase family. Xpt subfamily. Homodimer.

The protein resides in the cytoplasm. It carries out the reaction XMP + diphosphate = xanthine + 5-phospho-alpha-D-ribose 1-diphosphate. The protein operates within purine metabolism; XMP biosynthesis via salvage pathway; XMP from xanthine: step 1/1. In terms of biological role, converts the preformed base xanthine, a product of nucleic acid breakdown, to xanthosine 5'-monophosphate (XMP), so it can be reused for RNA or DNA synthesis. In Lachnoclostridium phytofermentans (strain ATCC 700394 / DSM 18823 / ISDg) (Clostridium phytofermentans), this protein is Xanthine phosphoribosyltransferase.